An 88-amino-acid polypeptide reads, in one-letter code: Large ribosomal subunit protein eL31 (88 aa).

Belongs to the eukaryotic ribosomal protein eL31 family.

The protein is Large ribosomal subunit protein eL31 of Methanoregula boonei (strain DSM 21154 / JCM 14090 / 6A8).